A 508-amino-acid chain; its full sequence is Histidine ammonia-lyase (508 aa).

The 5-imidazolinone (Ala-Gly) cross-link spans 143 to 145 (ASG). Ser144 carries the post-translational modification 2,3-didehydroalanine (Ser).

The protein belongs to the PAL/histidase family. Contains an active site 4-methylidene-imidazol-5-one (MIO), which is formed autocatalytically by cyclization and dehydration of residues Ala-Ser-Gly.

The protein resides in the cytoplasm. It carries out the reaction L-histidine = trans-urocanate + NH4(+). It functions in the pathway amino-acid degradation; L-histidine degradation into L-glutamate; N-formimidoyl-L-glutamate from L-histidine: step 1/3. The sequence is that of Histidine ammonia-lyase from Anaeromyxobacter dehalogenans (strain 2CP-C).